The primary structure comprises 234 residues: Lipoprotein-releasing system ATP-binding protein LolD 1 (234 aa).

The 227-residue stretch at 5-231 folds into the ABC transporter domain; that stretch reads IEARGIEKVF…RLTSNVRDPG (227 aa). Residue 41–48 coordinates ATP; that stretch reads GASGSGKS.

It belongs to the ABC transporter superfamily. Lipoprotein translocase (TC 3.A.1.125) family. The complex is composed of two ATP-binding proteins (LolD) and two transmembrane proteins (LolC and LolE).

The protein localises to the cell inner membrane. Functionally, part of the ABC transporter complex LolCDE involved in the translocation of mature outer membrane-directed lipoproteins, from the inner membrane to the periplasmic chaperone, LolA. Responsible for the formation of the LolA-lipoprotein complex in an ATP-dependent manner. This is Lipoprotein-releasing system ATP-binding protein LolD 1 from Caulobacter vibrioides (strain ATCC 19089 / CIP 103742 / CB 15) (Caulobacter crescentus).